Reading from the N-terminus, the 253-residue chain is Aminoglycoside nucleotidyltransferase (4') (253 aa).

Positions 1–127 are N-terminal domain; that stretch reads MNGPIIMTRE…KVYQTAKSVE (127 aa). ATP is bound by residues S39, R42, S49, D50, and E52. Mg(2+) contacts are provided by D50 and E52. Residues E52 and E67 each coordinate neomycin B. Kanamycin A is bound by residues E67, K74, E76, E141, and E145. Residues 128 to 241 are C-terminal domain; that stretch reads AQTFHDAICA…NGIQEWTERH (114 aa). E145, K149, and T187 together coordinate ATP. E145 provides a ligand contact to Mg(2+). The Proton acceptor role is filled by E145.

In terms of assembly, homodimer. Requires Mg(2+) as cofactor.

The enzyme catalyses amikacin + ATP = 4'-adenylylamikacin + diphosphate. It catalyses the reaction kanamycin A + ATP = 4'-adenylylkanamycin A + diphosphate. It carries out the reaction neomycin B + ATP = 4'-adenylylneomycin B + diphosphate. The catalysed reaction is paromomycin + ATP = 4'-adenylylparomomycin + diphosphate. The enzyme catalyses ribostamycin + ATP = 4'-adenylylribostamycin + diphosphate. It catalyses the reaction tobramycin + ATP = 4'-adenylyltobramycin + diphosphate. It carries out the reaction kanamycin A + CTP = 4'-cytidylylkanamycin A + diphosphate. The catalysed reaction is kanamycin A + GTP = 4'-guanylylkanamycin A + diphosphate. The enzyme catalyses kanamycin A + ITP = 4'-inosinylylkanamycin A + diphosphate. It catalyses the reaction dTTP + kanamycin A = 4'-thymidylylkanamycin A + diphosphate. It carries out the reaction kanamycin A + UTP = 4'-uridylylkanamycin A + diphosphate. The catalysed reaction is kanamycin A + dATP = 4'-(2'-deoxyadenylyl)kanamycin A + diphosphate. The enzyme catalyses kanamycin A + dCTP = 4'-(2'-deoxycytidylyl)kanamycin A + diphosphate. It catalyses the reaction kanamycin A + dGTP = 4'-(2'-deoxyguanylyl)kanamycin A + diphosphate. It carries out the reaction dUTP + kanamycin A = 4'-(2'-deoxyuridylyl)kanamycin A + diphosphate. The catalysed reaction is amikacin + GTP = 4'-guanylylamikacin + diphosphate. The enzyme catalyses amikacin + ITP = 4'-inosinylylamikacin + diphosphate. It catalyses the reaction amikacin + CTP = 4'-cytidylylamikacin + diphosphate. It carries out the reaction amikacin + UTP = 4'-uridylylamikacin + diphosphate. The catalysed reaction is amikacin + dTTP = 4'-thymidylylamikacin + diphosphate. Its function is as follows. Inactivates aminoglycoside antibiotics such as kanamycin by catalyzing the transfer of a nucleotidyl group from a wide variety of nucleoside triphosphates ((d)ATP, (d)CTP, (d)GTP, ITP, TTP and (d)UTP) to the 4'-hydroxyl group of the aminoglycoside. In vitro, antibiotics without the 4'-hydroxyl but possessing a 4''-hydroxyl group (e.g. sisomicin and gentamicin) are also modifed but with poor specificity. The 3' position of the NTP ribose ring does not tolerate large substitutions (e.g. ddATP) and dNTPs and TTP are better substrates than their NTP counterparts. A short (2.35 Angstrom) hydrogen bond initially facilitates tight binding of the substrate (between Glu-52 and antibiotic) that is subsequently disrupted by the assembly of the active ternary complex. This enables the release of products post-catalysis, a 'catch and release' mechanism. In Staphylococcus aureus, this protein is Aminoglycoside nucleotidyltransferase (4') (knt).